Consider the following 666-residue polypeptide: ATP synthase subunit alpha 2 (666 aa).

182 to 189 provides a ligand contact to ATP; sequence GDRATGKT. The interval 527-666 is disordered; it reads MPAEDAAGDI…DAEAEARHKR (140 aa). Positions 545 to 590 are enriched in basic and acidic residues; the sequence is ARGDADRDADHGANREVSREVSPEASREVSREVSCEVSHEADRDAA. Positions 591-601 are enriched in low complexity; sequence ADAARVAGRAP. Positions 623-641 are enriched in basic and acidic residues; that stretch reads ADGDRASASRPRPDARGDA.

The protein belongs to the ATPase alpha/beta chains family. F-type ATPases have 2 components, CF(1) - the catalytic core - and CF(0) - the membrane proton channel. CF(1) has five subunits: alpha(3), beta(3), gamma(1), delta(1), epsilon(1). CF(0) has three main subunits: a(1), b(2) and c(9-12). The alpha and beta chains form an alternating ring which encloses part of the gamma chain. CF(1) is attached to CF(0) by a central stalk formed by the gamma and epsilon chains, while a peripheral stalk is formed by the delta and b chains.

Its subcellular location is the cell inner membrane. It carries out the reaction ATP + H2O + 4 H(+)(in) = ADP + phosphate + 5 H(+)(out). Functionally, produces ATP from ADP in the presence of a proton gradient across the membrane. The alpha chain is a regulatory subunit. This chain is ATP synthase subunit alpha 2, found in Burkholderia pseudomallei (strain 1106a).